The chain runs to 63 residues: Large ribosomal subunit protein uL30 (63 aa).

The protein belongs to the universal ribosomal protein uL30 family. As to quaternary structure, part of the 50S ribosomal subunit.

This is Large ribosomal subunit protein uL30 from Stenotrophomonas maltophilia (strain K279a).